A 549-amino-acid chain; its full sequence is Nucleoporin nup61 (549 aa).

Positions 1-32 are enriched in basic and acidic residues; it reads MSKRGADHQLTKDQDDSDDDRHGPVEVPKEAS. Disordered stretches follow at residues 1 to 57, 133 to 193, and 207 to 438; these read MSKR…VSSP, IEKK…GFSA, and FTPK…NEDS. Ser-17 bears the Phosphoserine mark. The segment covering 40–50 has biased composition (basic residues); that stretch reads KIAKPKSRKRP. The segment covering 141 to 165 has biased composition (polar residues); that stretch reads QPTSNAVVSEVNPQQQKSQDSSSFV. Composition is skewed to basic and acidic residues over residues 170–180 and 217–228; these read ASSEKEDKEKP and SATEAEAKEKET. The span at 229 to 244 shows a compositional bias: low complexity; the sequence is SSNQTATGTAATTTNQ. Basic and acidic residues-rich tracts occupy residues 282–310 and 328–339; these read ASKE…KSEN and KPIKFDTPEKKF. Ser-347 carries the phosphoserine modification. Residues 407–421 show a composition bias toward basic and acidic residues; it reads SEQEEKENGNDETRS. In terms of domain architecture, RanBD1 spans 416 to 549; it reads NDETRSNDSL…NEKKVSKSEN (134 aa).

The protein localises to the nucleus. Its subcellular location is the nuclear pore complex. Functions as a component of the nuclear pore complex (NPC). NPC components, collectively referred to as nucleoporins (NUPs), can play the role of both NPC structural components and of docking or interaction partners for transiently associated nuclear transport factors. Active directional transport is assured by both, a Phe-Gly (FG) repeat affinity gradient for these transport factors across the NPC and a transport cofactor concentration gradient across the nuclear envelope. May play a role in mitotic spindle formation and/or function. The chain is Nucleoporin nup61 (nup61) from Schizosaccharomyces pombe (strain 972 / ATCC 24843) (Fission yeast).